Reading from the N-terminus, the 1291-residue chain is Vigilin 1 (1291 aa).

The span at 1-39 shows a compositional bias: polar residues; that stretch reads MEHLSNLEQPTTMDSYDFQKLTNDENLQGTESQVPSGSK. Disordered regions lie at residues 1 to 45 and 70 to 91; these read MEHL…STNG and HENAQQGKKQNNSKSFSKKPAI. Low complexity predominate over residues 73 to 88; the sequence is AQQGKKQNNSKSFSKK. The residue at position 115 (serine 115) is a Phosphoserine. Residues 124–148 form a disordered region; the sequence is TSVAGSDSVSRDKIPFSASSRASST. 12 consecutive KH domains span residues 166–229, 236–328, 339–405, 416–486, 575–644, 658–726, 741–798, 808–883, 894–957, 967–1040, 1050–1114, and 1219–1280; these read ILSP…RRQI, RETK…QKDI, TTVR…ALYL, TIPT…NSTI, SKFY…LADL, IVSE…VSEI, SHVE…AARI, DTIL…KQEL, AYTS…IKEI, LVEK…ETRL, QVEE…KEMI, and NCIA…KDLI. The disordered stretch occupies residues 266–303; that stretch reads TSTRIQIPKRNNTANESSDDAKKPEKEENSAASTLDDL. Polar residues predominate over residues 268–281; it reads TRIQIPKRNNTANE. Over residues 284–294 the composition is skewed to basic and acidic residues; that stretch reads DDAKKPEKEEN. The disordered stretch occupies residues 845–865; it reads PREDDSSNSTGNELMKPTSPD. Position 934 is a phosphoserine (serine 934). Residue threonine 935 is modified to Phosphothreonine.

It localises to the endoplasmic reticulum. Its subcellular location is the cytoplasm. Its function is as follows. Required for cell survival under thermal stress. The polypeptide is Vigilin 1 (vgl1) (Schizosaccharomyces pombe (strain 972 / ATCC 24843) (Fission yeast)).